The primary structure comprises 148 residues: Mediator of RNA polymerase II transcription subunit 31 (148 aa).

The protein belongs to the Mediator complex subunit 31 family. In terms of assembly, component of the Mediator complex.

It is found in the nucleus. Functionally, component of the Mediator complex, a coactivator involved in the regulated transcription of nearly all RNA polymerase II-dependent genes. Mediator functions as a bridge to convey information from gene-specific regulatory proteins to the basal RNA polymerase II transcription machinery. Mediator is recruited to promoters by direct interactions with regulatory proteins and serves as a scaffold for the assembly of a functional preinitiation complex with RNA polymerase II and the general transcription factors. This Taenia solium (Pork tapeworm) protein is Mediator of RNA polymerase II transcription subunit 31.